Consider the following 126-residue polypeptide: Large ribosomal subunit protein bL12 (126 aa).

This sequence belongs to the bacterial ribosomal protein bL12 family. Homodimer. Part of the ribosomal stalk of the 50S ribosomal subunit. Forms a multimeric L10(L12)X complex, where L10 forms an elongated spine to which 2 to 4 L12 dimers bind in a sequential fashion. Binds GTP-bound translation factors.

Its function is as follows. Forms part of the ribosomal stalk which helps the ribosome interact with GTP-bound translation factors. Is thus essential for accurate translation. The sequence is that of Large ribosomal subunit protein bL12 from Bifidobacterium longum (strain DJO10A).